The primary structure comprises 161 residues: Calmodulin-like protein (161 aa).

4 EF-hand domains span residues 21–56, 57–92, 93–128, and 129–161; these read EEIDEFREAFMMFDKDGNGTISTKELGIAMRSLGQN, PTEQEILEMINEVDIDGNGQIEFPEFCVMMKRMMKE, TDSEMIREAFRVFDKDGNGVITAQEFRYFMVHMGMQ, and FSEEEVDEMIKEVDVDGDGEIDYEEFVKMMSNQ. The Ca(2+) site is built by aspartate 34, aspartate 36, asparagine 38, threonine 40, glutamate 45, aspartate 70, aspartate 72, asparagine 74, glutamine 76, glutamate 81, aspartate 106, aspartate 108, asparagine 110, glutamate 117, aspartate 142, aspartate 144, aspartate 146, glutamate 148, and glutamate 153.

The protein belongs to the calmodulin family.

Functionally, this protein resembles calmodulin in sequence but possibly resembles troponin C in function. This chain is Calmodulin-like protein (cal-1), found in Caenorhabditis elegans.